The primary structure comprises 172 residues: Small ribosomal subunit protein uS5 (172 aa).

The S5 DRBM domain maps to 16-79 (LKDRLVAINR…ESAKKNLVKV (64 aa)).

Belongs to the universal ribosomal protein uS5 family. Part of the 30S ribosomal subunit. Contacts proteins S4 and S8.

With S4 and S12 plays an important role in translational accuracy. In terms of biological role, located at the back of the 30S subunit body where it stabilizes the conformation of the head with respect to the body. This is Small ribosomal subunit protein uS5 from Bacteroides thetaiotaomicron (strain ATCC 29148 / DSM 2079 / JCM 5827 / CCUG 10774 / NCTC 10582 / VPI-5482 / E50).